Reading from the N-terminus, the 406-residue chain is Phosphopentomutase (406 aa).

Residues D10, D305, H310, D346, H347, and H358 each coordinate Mn(2+).

The protein belongs to the phosphopentomutase family. Mn(2+) serves as cofactor.

The protein localises to the cytoplasm. It carries out the reaction 2-deoxy-alpha-D-ribose 1-phosphate = 2-deoxy-D-ribose 5-phosphate. It catalyses the reaction alpha-D-ribose 1-phosphate = D-ribose 5-phosphate. Its pathway is carbohydrate degradation; 2-deoxy-D-ribose 1-phosphate degradation; D-glyceraldehyde 3-phosphate and acetaldehyde from 2-deoxy-alpha-D-ribose 1-phosphate: step 1/2. Isomerase that catalyzes the conversion of deoxy-ribose 1-phosphate (dRib-1-P) and ribose 1-phosphate (Rib-1-P) to deoxy-ribose 5-phosphate (dRib-5-P) and ribose 5-phosphate (Rib-5-P), respectively. The protein is Phosphopentomutase of Aliivibrio fischeri (strain MJ11) (Vibrio fischeri).